We begin with the raw amino-acid sequence, 206 residues long: 7-methyl-GTP pyrophosphatase (206 aa).

D82 acts as the Proton acceptor in catalysis.

The protein belongs to the Maf family. YceF subfamily. Requires a divalent metal cation as cofactor.

Its subcellular location is the cytoplasm. It catalyses the reaction N(7)-methyl-GTP + H2O = N(7)-methyl-GMP + diphosphate + H(+). Nucleoside triphosphate pyrophosphatase that hydrolyzes 7-methyl-GTP (m(7)GTP). May have a dual role in cell division arrest and in preventing the incorporation of modified nucleotides into cellular nucleic acids. This is 7-methyl-GTP pyrophosphatase from Shewanella denitrificans (strain OS217 / ATCC BAA-1090 / DSM 15013).